A 233-amino-acid chain; its full sequence is Antiholin-like protein LrgB (233 aa).

7 helical membrane-spanning segments follow: residues 7 to 27 (INTPYFGILLSLIPFIIATFL), 33 to 53 (GFFLFTPLFVSMVVGIAFLKL), 63 to 83 (IGGDIINFFLEPATICFAIPL), 97 to 117 (ILGGITLGTTAALVCIYLIAE), 124 to 144 (GIIASMLPQGATTAIALPVSA), 152 to 172 (LTSLAVILNGVIIYALGSKLI), and 212 to 232 (ISLVIVGVIVVIVAPILATLL).

Belongs to the CidB/LrgB family. LrgB subfamily.

It localises to the cell membrane. In terms of biological role, inhibits the expression or activity of extracellular murein hydrolases by interacting, possibly with LrgA, with the holin-like proteins CidA and/or CidB. The LrgAB and CidAB proteins may affect the proton motive force of the membrane. May be involved in programmed cell death (PCD), possibly triggering PCD in response to antibiotics and environmental stresses. The polypeptide is Antiholin-like protein LrgB (Staphylococcus saprophyticus subsp. saprophyticus (strain ATCC 15305 / DSM 20229 / NCIMB 8711 / NCTC 7292 / S-41)).